Here is a 367-residue protein sequence, read N- to C-terminus: 2-aminoethylphosphonate--pyruvate transaminase (367 aa).

N6-(pyridoxal phosphate)lysine is present on Lys194.

This sequence belongs to the class-V pyridoxal-phosphate-dependent aminotransferase family. PhnW subfamily. As to quaternary structure, homodimer. Pyridoxal 5'-phosphate is required as a cofactor.

It carries out the reaction (2-aminoethyl)phosphonate + pyruvate = phosphonoacetaldehyde + L-alanine. Involved in phosphonate degradation. The sequence is that of 2-aminoethylphosphonate--pyruvate transaminase from Salmonella dublin (strain CT_02021853).